The primary structure comprises 49 residues: Large ribosomal subunit protein bL33B (49 aa).

It belongs to the bacterial ribosomal protein bL33 family.

The sequence is that of Large ribosomal subunit protein bL33B from Lactobacillus helveticus (strain DPC 4571).